Here is a 272-residue protein sequence, read N- to C-terminus: Dermonecrotic toxin LvSicTox-alphaIC1bii (272 aa).

Residue histidine 5 is part of the active site. Mg(2+) is bound by residues glutamate 25 and aspartate 27. Catalysis depends on histidine 41, which acts as the Nucleophile. 2 cysteine pairs are disulfide-bonded: cysteine 45/cysteine 51 and cysteine 47/cysteine 189. Position 84 (aspartate 84) interacts with Mg(2+).

It belongs to the arthropod phospholipase D family. Class II subfamily. It depends on Mg(2+) as a cofactor. Expressed by the venom gland.

It localises to the secreted. It catalyses the reaction an N-(acyl)-sphingosylphosphocholine = an N-(acyl)-sphingosyl-1,3-cyclic phosphate + choline. The catalysed reaction is an N-(acyl)-sphingosylphosphoethanolamine = an N-(acyl)-sphingosyl-1,3-cyclic phosphate + ethanolamine. It carries out the reaction a 1-acyl-sn-glycero-3-phosphocholine = a 1-acyl-sn-glycero-2,3-cyclic phosphate + choline. The enzyme catalyses a 1-acyl-sn-glycero-3-phosphoethanolamine = a 1-acyl-sn-glycero-2,3-cyclic phosphate + ethanolamine. Dermonecrotic toxins cleave the phosphodiester linkage between the phosphate and headgroup of certain phospholipids (sphingolipid and lysolipid substrates), forming an alcohol (often choline) and a cyclic phosphate. This toxin acts on sphingomyelin (SM). It may also act on ceramide phosphoethanolamine (CPE), lysophosphatidylcholine (LPC) and lysophosphatidylethanolamine (LPE), but not on lysophosphatidylserine (LPS), and lysophosphatidylglycerol (LPG). It acts by transphosphatidylation, releasing exclusively cyclic phosphate products as second products. Induces dermonecrosis, hemolysis, increased vascular permeability, edema, inflammatory response, and platelet aggregation. The polypeptide is Dermonecrotic toxin LvSicTox-alphaIC1bii (Loxosceles variegata (Recluse spider)).